Here is a 387-residue protein sequence, read N- to C-terminus: Formate-dependent phosphoribosylglycinamide formyltransferase (387 aa).

N(1)-(5-phospho-beta-D-ribosyl)glycinamide is bound by residues 15 to 16 (EL) and E75. ATP-binding positions include R106, K147, 152 to 157 (SSGKGQ), 187 to 190 (EEFI), and E195. One can recognise an ATP-grasp domain in the interval 111–301 (DLASNELNIR…EFELHLRAVL (191 aa)). Residues E260 and E272 each contribute to the Mg(2+) site. N(1)-(5-phospho-beta-D-ribosyl)glycinamide is bound by residues D279, K349, and 356 to 357 (RR).

It belongs to the PurK/PurT family. In terms of assembly, homodimer.

The enzyme catalyses N(1)-(5-phospho-beta-D-ribosyl)glycinamide + formate + ATP = N(2)-formyl-N(1)-(5-phospho-beta-D-ribosyl)glycinamide + ADP + phosphate + H(+). It functions in the pathway purine metabolism; IMP biosynthesis via de novo pathway; N(2)-formyl-N(1)-(5-phospho-D-ribosyl)glycinamide from N(1)-(5-phospho-D-ribosyl)glycinamide (formate route): step 1/1. In terms of biological role, involved in the de novo purine biosynthesis. Catalyzes the transfer of formate to 5-phospho-ribosyl-glycinamide (GAR), producing 5-phospho-ribosyl-N-formylglycinamide (FGAR). Formate is provided by PurU via hydrolysis of 10-formyl-tetrahydrofolate. This is Formate-dependent phosphoribosylglycinamide formyltransferase from Prochlorococcus marinus (strain NATL2A).